We begin with the raw amino-acid sequence, 146 residues long: Hemoglobin subunit beta (146 aa).

The Globin domain occupies 2–146 (HWTAEEKQLI…VAHALARKYH (145 aa)). The heme b site is built by histidine 63 and histidine 92.

It belongs to the globin family. As to quaternary structure, heterotetramer of two alpha chains and two beta chains. As to expression, red blood cells.

Its function is as follows. Involved in oxygen transport from the lung to the various peripheral tissues. The protein is Hemoglobin subunit beta (HBB) of Aquila chrysaetos (Golden eagle).